The primary structure comprises 713 residues: Glutamine-dependent NAD(+) synthetase (713 aa).

The CN hydrolase domain maps to 4-275 (VTLATCNLNQ…IEVITATVDL (272 aa)). The Proton acceptor; for glutaminase activity role is filled by E44. K114 functions as the For glutaminase activity in the catalytic mechanism. C175 serves as the catalytic Nucleophile; for glutaminase activity. The tract at residues 324-703 (YNTPAEEIGF…QRPQLKNTVN (380 aa)) is ligase. An ATP-binding site is contributed by 354-361 (PLSGGADS). Residue S356 is part of the active site.

This sequence in the C-terminal section; belongs to the NAD synthetase family.

The enzyme catalyses deamido-NAD(+) + L-glutamine + ATP + H2O = L-glutamate + AMP + diphosphate + NAD(+) + H(+). Its pathway is cofactor biosynthesis; NAD(+) biosynthesis; NAD(+) from deamido-NAD(+) (L-Gln route): step 1/1. This chain is Glutamine-dependent NAD(+) synthetase (nadsyn1), found in Dictyostelium discoideum (Social amoeba).